The sequence spans 240 residues: Transcriptional regulatory protein ResD (240 aa).

The 114-residue stretch at 8 to 121 (KILVVDDEAR…EVVLRVKALL (114 aa)) folds into the Response regulatory domain. Aspartate 57 is modified (4-aspartylphosphate). The segment at residues 137-237 (KNVLVFSHLS…VWGVGYKFEV (101 aa)) is a DNA-binding region (ompR/PhoB-type).

In terms of assembly, interacts with the RNA polymerase core. In terms of processing, phosphorylated by ResE.

The protein resides in the cytoplasm. In terms of biological role, member of the two-component regulatory system ResD/ResE. Required for the expression of resA, ctaA, qcrABC and fnr; activation role in global regulation of aerobic and anaerobic respiration. The chain is Transcriptional regulatory protein ResD (resD) from Bacillus subtilis (strain 168).